Reading from the N-terminus, the 447-residue chain is Serine/threonine-protein phosphatase 2A 55 kDa regulatory subunit B gamma isoform (447 aa).

WD repeat units lie at residues 22–61, 87–128, 171–209, 220–260, 279–317, 334–375, and 410–446; these read TEAD…KNAP, EIEE…KRPE, GHTY…RSFN, DLTE…LCDK, EIIS…RPIE, ESDC…DVTL, and DFTK…NSDM.

It belongs to the phosphatase 2A regulatory subunit B family. In terms of assembly, PP2A consists of a common heterodimeric core enzyme, composed of a 36 kDa catalytic subunit (subunit C) and a 65 kDa constant regulatory subunit (PR65 or subunit A), that associates with a variety of regulatory subunits. Proteins that associate with the core dimer include three families of regulatory subunits B (the R2/B/PR55/B55, R3/B''/PR72/PR130/PR59 and R5/B'/B56 families), the 48 kDa variable regulatory subunit, viral proteins, and cell signaling molecules. Interacts with IER5.

Its function is as follows. The B regulatory subunit might modulate substrate selectivity and catalytic activity, and might also direct the localization of the catalytic enzyme to a particular subcellular compartment. This Mus musculus (Mouse) protein is Serine/threonine-protein phosphatase 2A 55 kDa regulatory subunit B gamma isoform (Ppp2r2c).